Reading from the N-terminus, the 155-residue chain is V-type proton ATPase 16 kDa proteolipid subunit c (155 aa).

Topologically, residues 1-10 (MADIKNNPEY) are lumenal. The helical transmembrane segment at 11 to 33 (SSFFGVMGASSAMVFSAMGAAYG) threads the bilayer. Residues 34–55 (TAKSGTGIAAMSVMRPELIMKS) lie on the Cytoplasmic side of the membrane. Residues 56 to 76 (IIPVVMAGIIAIYGLVVAVLI) traverse the membrane as a helical segment. Residues 77 to 92 (ANSLTDGITLYRSFLQ) are Lumenal-facing. Residues 93-114 (LGAGLSVGLSGLAAGFAIGIVG) traverse the membrane as a helical segment. The Cytoplasmic segment spans residues 115–131 (DAGVRGTAQQPRLFVGM). Residues 132 to 152 (ILILIFAEVLGLYGLIVALIL) form a helical membrane-spanning segment. The Lumenal segment spans residues 153–155 (STK).

Belongs to the V-ATPase proteolipid subunit family. In terms of assembly, V-ATPase is a heteromultimeric enzyme made up of two complexes: the ATP-hydrolytic V1 complex and the proton translocation V0 complex. The V1 complex consists of three catalytic AB heterodimers that form a heterohexamer, three peripheral stalks each consisting of EG heterodimers, one central rotor including subunits D and F, and the regulatory subunits C and H. The proton translocation complex V0 consists of the proton transport subunit a, a ring of proteolipid subunits c9c'', rotary subunit d, subunits e and f, and the accessory subunits ATP6AP1/Ac45 and ATP6AP2/PRR. Interacts with the V0 complex V-ATPase subunit a4 ATP6V0A4. Interacts with LASS2. Interacts with RNF182; this interaction leads to ubiquitination and degradation via the proteasome pathway. In terms of processing, ubiquitinated by RNF182, leading to its degradation via the ubiquitin-proteasome pathway.

The protein localises to the cytoplasmic vesicle. The protein resides in the clathrin-coated vesicle membrane. Its subcellular location is the secretory vesicle. It is found in the synaptic vesicle membrane. Its function is as follows. Proton-conducting pore forming subunit of the V0 complex of vacuolar(H+)-ATPase (V-ATPase), a multisubunit enzyme composed of a peripheral complex (V1) that hydrolyzes ATP and a membrane integral complex (V0) that translocates protons. V-ATPase is responsible for acidifying and maintaining the pH of intracellular compartments and in some cell types, is targeted to the plasma membrane, where it is responsible for acidifying the extracellular environment. In Mus musculus (Mouse), this protein is V-type proton ATPase 16 kDa proteolipid subunit c (Atp6v0c).